A 128-amino-acid chain; its full sequence is Transcription antitermination protein NusB (128 aa).

It belongs to the NusB family.

In terms of biological role, involved in transcription antitermination. Required for transcription of ribosomal RNA (rRNA) genes. Binds specifically to the boxA antiterminator sequence of the ribosomal RNA (rrn) operons. This Staphylococcus carnosus (strain TM300) protein is Transcription antitermination protein NusB.